The following is a 507-amino-acid chain: tRNA (guanine(6)-N(2))-methyltransferase THUMP3 (507 aa).

The THUMP domain maps to lysine 165–leucine 285.

Belongs to the methyltransferase superfamily. As to quaternary structure, part of the heterodimeric THUMPD3-TRM112 methyltransferase complex; this complex forms an active tRNA methyltransferase, where TRMT112 acts as an activator of the catalytic subunit THUMPD3.

The protein localises to the cytoplasm. It carries out the reaction guanosine(6) in tRNA + S-adenosyl-L-methionine = N(2)-methylguanosine(6) in tRNA + S-adenosyl-L-homocysteine + H(+). The catalysed reaction is guanosine(7) in tRNA + S-adenosyl-L-methionine = N(2)-methylguanosine(7) in tRNA + S-adenosyl-L-homocysteine + H(+). Its function is as follows. Catalytic subunit of the THUMPD3-TRM112 methyltransferase complex, that specifically mediates the S-adenosyl-L-methionine-dependent N(2)-methylation of guanosine nucleotide at position 6 (m2G6) in tRNAs. This is one of the major tRNA (guanine-N(2))-methyltransferases. Also catalyzes the S-adenosyl-L-methionine-dependent N(2)-methylation of guanosine nucleotide at position 7 of tRNA(Trp). The polypeptide is tRNA (guanine(6)-N(2))-methyltransferase THUMP3 (Homo sapiens (Human)).